The sequence spans 428 residues: Trigger factor (428 aa).

The PPIase FKBP-type domain maps to 163 to 248 (GDTAVIDFEG…VHEVKAKQLP (86 aa)).

It belongs to the FKBP-type PPIase family. Tig subfamily.

It is found in the cytoplasm. It carries out the reaction [protein]-peptidylproline (omega=180) = [protein]-peptidylproline (omega=0). Functionally, involved in protein export. Acts as a chaperone by maintaining the newly synthesized protein in an open conformation. Functions as a peptidyl-prolyl cis-trans isomerase. The protein is Trigger factor of Geobacillus thermodenitrificans (strain NG80-2).